The sequence spans 466 residues: Metaxin-1 (466 aa).

The segment covering 1 to 19 (MLLGGPPRSPRSGTSPKGP) has biased composition (low complexity). A disordered region spans residues 1-133 (MLLGGPPRSP…AVAGGGPRQG (133 aa)). Residues 20–36 (WSSTGHVQFGKSPQTWP) are compositionally biased toward polar residues. A compositionally biased stretch (low complexity) spans 90–110 (ARGPVPRSSAASRARRSLASP). Glycyl lysine isopeptide (Lys-Gly) (interchain with G-Cter in ubiquitin) cross-links involve residues K187, K190, K227, and K317. The helical transmembrane segment at 421-441 (ILSVLAGLAAMVGYALLSGIV) threads the bilayer.

This sequence belongs to the metaxin family. In terms of assembly, interacts with MTX2/metaxin-2. Associates with the mitochondrial contact site and cristae organizing system (MICOS) complex, composed of at least MICOS10/MIC10, CHCHD3/MIC19, CHCHD6/MIC25, APOOL/MIC27, IMMT/MIC60, APOO/MIC23/MIC26 and QIL1/MIC13. This complex was also known under the names MINOS or MitOS complex. The MICOS complex associates with mitochondrial outer membrane proteins SAMM50, MTX1 and MTX2 (together described as components of the mitochondrial outer membrane sorting assembly machinery (SAM) complex) and DNAJC11, mitochondrial inner membrane protein TMEM11 and with HSPA9. The MICOS and SAM complexes together with DNAJC11 are part of a large protein complex spanning both membranes termed the mitochondrial intermembrane space bridging (MIB) complex. Interacts with ARMC1. Post-translationally, ubiquitinated by PRKN during mitophagy, leading to its degradation and enhancement of mitophagy. Deubiquitinated by USP30.

The protein resides in the membrane. Its subcellular location is the mitochondrion outer membrane. Functionally, involved in transport of proteins into the mitochondrion. Essential for embryonic development. The protein is Metaxin-1 (MTX1) of Homo sapiens (Human).